Consider the following 280-residue polypeptide: Probable 2-(5''-triphosphoribosyl)-3'-dephosphocoenzyme-A synthase (280 aa).

The protein belongs to the CitG/MdcB family.

The enzyme catalyses 3'-dephospho-CoA + ATP = 2'-(5''-triphospho-alpha-D-ribosyl)-3'-dephospho-CoA + adenine. The chain is Probable 2-(5''-triphosphoribosyl)-3'-dephosphocoenzyme-A synthase from Lactiplantibacillus plantarum (strain ATCC BAA-793 / NCIMB 8826 / WCFS1) (Lactobacillus plantarum).